The sequence spans 379 residues: Flagellin A (379 aa).

Coiled-coil stretches lie at residues 104–129 (NSASERQALNEESVALQDELNRIAET) and 314–341 (QNRLSHSISNLSNIQENVEASKSRIKDT).

This sequence belongs to the bacterial flagellin family. In terms of assembly, heteromer of multiple flagellin subunits including FlaA, FlaB, FlaC, FlaD and FlaE.

It is found in the secreted. The protein localises to the bacterial flagellum. Its function is as follows. Flagellin is the subunit protein which polymerizes to form the filaments of bacterial flagella. FlaA is required to form a core or scaffold into which the other flagellins are inserted to provide structural integrity. Essential for flagellar synthesis and motility; important for full virulence. This Vibrio cholerae serotype O1 (strain ATCC 39541 / Classical Ogawa 395 / O395) protein is Flagellin A (flaA).